The following is a 409-amino-acid chain: MENTLLWLVILIPGWALSDGSETELDFTWHLSRIPQVVSENTIHLASPTFQADAGVVKATVCGIECQEELPAPSLSQLEESLSYETIFENGTRTLTRVKVQGLVLEPTRNSSVKGAHPRRRRQVYGTDSRFSILDKRFATNFPFNTAVKLSTGCSGTLVSPNHVLTAAHCVHDGKDYVKGSKKLRVGVLKMRNKGGRKKRRGSKRSRREAESAGQSQAHLRESTTQRPGKKSRRGPRVTQGRPSFQWTRVKSTHIPKGWVRGENGGLALDYDYALLELKRAHKQQHMELGVSPTITKLPGGRIHFSGFDNDRDEQLVYRFCSVSEESNDLLYQYCDAEAGSTGSGIYLRLKEPGQKNWKRKIVAVYSGHQWVDVHGVQKDYNVAVRITPLKYAQICLWIHGNAANCAYG.

A signal peptide spans 1 to 20 (MENTLLWLVILIPGWALSDG). A glycan (N-linked (GlcNAc...) asparagine) is linked at asparagine 90. In terms of domain architecture, Peptidase S1 spans 124–404 (VYGTDSRFSI…ICLWIHGNAA (281 aa)). Cysteines 154 and 170 form a disulfide. Positions 188–207 (VLKMRNKGGRKKRRGSKRSR) are enriched in basic residues. The disordered stretch occupies residues 188 to 247 (VLKMRNKGGRKKRRGSKRSRREAESAGQSQAHLRESTTQRPGKKSRRGPRVTQGRPSFQW).

Belongs to the peptidase S1 family. In terms of tissue distribution, in ovary, it localizes to the theca cells of pre-antral follicles, the theca and granulosa cells of pre-ovulatory and ovulatory follicles, as well as to the developing corpus luteum.

The protein localises to the secreted. In Mus musculus (Mouse), this protein is Inactive serine protease 35 (Prss35).